Reading from the N-terminus, the 129-residue chain is Small ribosomal subunit protein uS8 (129 aa).

The protein belongs to the universal ribosomal protein uS8 family. In terms of assembly, part of the 30S ribosomal subunit. Contacts proteins S5 and S12.

In terms of biological role, one of the primary rRNA binding proteins, it binds directly to 16S rRNA central domain where it helps coordinate assembly of the platform of the 30S subunit. This chain is Small ribosomal subunit protein uS8, found in Dichelobacter nodosus (strain VCS1703A).